A 200-amino-acid polypeptide reads, in one-letter code: Coiled-coil domain-containing protein 85B (200 aa).

A coiled-coil region spans residues 57–84 (LQGHLLEIRELKVINQRLQEENQELRDL). A compositionally biased stretch (low complexity) spans 178–188 (DGSSSTGSVGS). The tract at residues 178 to 200 (DGSSSTGSVGSPDQLHLVCSPDD) is disordered.

Belongs to the CCDC85 family.

It is found in the nucleus. The protein resides in the cytoplasm. It localises to the cytoskeleton. The protein localises to the microtubule organizing center. Its subcellular location is the centrosome. It is found in the cell junction. The protein resides in the adherens junction. Its function is as follows. Functions as a transcriptional repressor. May inhibit the activity of CTNNB1 in a TP53-dependent manner and thus regulate cell growth. May function in adipocyte differentiation, negatively regulating mitotic clonal expansion. Plays a role in cell-cell adhesion and epithelium development through its interaction with proteins of the beta-catenin family. The chain is Coiled-coil domain-containing protein 85B (ccdc85b) from Danio rerio (Zebrafish).